Reading from the N-terminus, the 221-residue chain is Ribosomal RNA large subunit methyltransferase E (221 aa).

Residues glycine 60, tryptophan 62, aspartate 89, aspartate 105, and aspartate 134 each coordinate S-adenosyl-L-methionine. The active-site Proton acceptor is lysine 174. The segment at 199-221 (KPKASRDKSSETFLLGRQLKHPG) is disordered.

This sequence belongs to the class I-like SAM-binding methyltransferase superfamily. RNA methyltransferase RlmE family.

The protein resides in the cytoplasm. The enzyme catalyses uridine(2552) in 23S rRNA + S-adenosyl-L-methionine = 2'-O-methyluridine(2552) in 23S rRNA + S-adenosyl-L-homocysteine + H(+). In terms of biological role, specifically methylates the uridine in position 2552 of 23S rRNA at the 2'-O position of the ribose in the fully assembled 50S ribosomal subunit. This chain is Ribosomal RNA large subunit methyltransferase E, found in Ralstonia nicotianae (strain ATCC BAA-1114 / GMI1000) (Ralstonia solanacearum).